We begin with the raw amino-acid sequence, 215 residues long: Pyridoxine/pyridoxamine 5'-phosphate oxidase (215 aa).

Substrate is bound by residues 9–12 (RRDY) and Lys-69. Residues 64–69 (RVLLLK), 79–80 (FT), Lys-86, and Gln-108 each bind FMN. Residues Tyr-126, Arg-130, and Ser-134 each contribute to the substrate site. FMN-binding positions include 143-144 (QS) and Trp-188. 194–196 (RLH) contacts substrate. Arg-198 provides a ligand contact to FMN.

This sequence belongs to the pyridoxamine 5'-phosphate oxidase family. Homodimer. Requires FMN as cofactor.

It carries out the reaction pyridoxamine 5'-phosphate + O2 + H2O = pyridoxal 5'-phosphate + H2O2 + NH4(+). The enzyme catalyses pyridoxine 5'-phosphate + O2 = pyridoxal 5'-phosphate + H2O2. Its pathway is cofactor metabolism; pyridoxal 5'-phosphate salvage; pyridoxal 5'-phosphate from pyridoxamine 5'-phosphate: step 1/1. It functions in the pathway cofactor metabolism; pyridoxal 5'-phosphate salvage; pyridoxal 5'-phosphate from pyridoxine 5'-phosphate: step 1/1. Functionally, catalyzes the oxidation of either pyridoxine 5'-phosphate (PNP) or pyridoxamine 5'-phosphate (PMP) into pyridoxal 5'-phosphate (PLP). The chain is Pyridoxine/pyridoxamine 5'-phosphate oxidase from Pseudomonas syringae pv. syringae (strain B728a).